A 448-amino-acid chain; its full sequence is Glucose-6-phosphate isomerase (448 aa).

The active-site Proton donor is the E290. Active-site residues include H311 and K425.

This sequence belongs to the GPI family.

The protein resides in the cytoplasm. It carries out the reaction alpha-D-glucose 6-phosphate = beta-D-fructose 6-phosphate. It functions in the pathway carbohydrate biosynthesis; gluconeogenesis. The protein operates within carbohydrate degradation; glycolysis; D-glyceraldehyde 3-phosphate and glycerone phosphate from D-glucose: step 2/4. Its function is as follows. Catalyzes the reversible isomerization of glucose-6-phosphate to fructose-6-phosphate. The polypeptide is Glucose-6-phosphate isomerase (Acetivibrio thermocellus (strain ATCC 27405 / DSM 1237 / JCM 9322 / NBRC 103400 / NCIMB 10682 / NRRL B-4536 / VPI 7372) (Clostridium thermocellum)).